A 746-amino-acid chain; its full sequence is UvrABC system protein C (746 aa).

The region spanning Ala-18–Val-97 is the GIY-YIG domain. Residues Arg-211 to Val-246 enclose the UVR domain. The disordered stretch occupies residues Ala-557–Pro-577.

The protein belongs to the UvrC family. As to quaternary structure, interacts with UvrB in an incision complex.

The protein localises to the cytoplasm. In terms of biological role, the UvrABC repair system catalyzes the recognition and processing of DNA lesions. UvrC both incises the 5' and 3' sides of the lesion. The N-terminal half is responsible for the 3' incision and the C-terminal half is responsible for the 5' incision. The chain is UvrABC system protein C from Bifidobacterium longum (strain NCC 2705).